Consider the following 328-residue polypeptide: MNPALPEDVKTLLTDLETFISDVLKGETLSKKAKEKKEVLIKRLKDIKHSHSLEFQAETDDLEENDGFPLPPDAVSIASDRDKDEELPYDGSFYPLVAAQDLEYLRAGYLEKRRKDHSFFASEWQKRWCVCTNSMFYYYGSDKDKQQKGAFSLDGYRAKMNDTLRKDAKKDCCFEIFAPDKRVYQFAASSPKEAEEWVNIIMNSRGNIPTEDEELYDDVNQEVDASHEEDIYEELPEESEKPVTEIETPKATPVPVNNTSGKENTDYANFYRGLWDCTGDHPDELSFKHGDTIYILSKEYNTYGWWVGEMKGTIGLVPKAYIMEMYDI.

Positions 103–206 (EYLRAGYLEK…WVNIIMNSRG (104 aa)) constitute a PH domain. The interval 231–262 (IYEELPEESEKPVTEIETPKATPVPVNNTSGK) is disordered. A compositionally biased stretch (basic and acidic residues) spans 238 to 248 (ESEKPVTEIET). An SH3 domain is found at 266–327 (DYANFYRGLW…PKAYIMEMYD (62 aa)).

Belongs to the SKAP family. Post-translationally, phosphorylated on tyrosines.

The protein localises to the cytoplasm. May be involved in B-cell and macrophage adhesion processes. May play a role in src signaling pathway. The sequence is that of Src kinase-associated phosphoprotein 2 (skap2) from Xenopus tropicalis (Western clawed frog).